Here is a 467-residue protein sequence, read N- to C-terminus: Glutamate--tRNA ligase (467 aa).

A 'HIGH' region motif is present at residues 9-19 (PSPTGYLHIGG). The short motif at 237–241 (KLSKR) is the 'KMSKS' region element. Lys-240 contributes to the ATP binding site.

This sequence belongs to the class-I aminoacyl-tRNA synthetase family. Glutamate--tRNA ligase type 1 subfamily. As to quaternary structure, monomer.

The protein resides in the cytoplasm. The catalysed reaction is tRNA(Glu) + L-glutamate + ATP = L-glutamyl-tRNA(Glu) + AMP + diphosphate. Catalyzes the attachment of glutamate to tRNA(Glu) in a two-step reaction: glutamate is first activated by ATP to form Glu-AMP and then transferred to the acceptor end of tRNA(Glu). This Xanthomonas campestris pv. campestris (strain B100) protein is Glutamate--tRNA ligase.